Consider the following 511-residue polypeptide: UDP-N-acetylmuramate--L-alanine ligase (511 aa).

An ATP-binding site is contributed by 127–133 (GTHGKTT). A disordered region spans residues 481–511 (VGTVPGGEVGGATTIGGTVPGGSAPGASAAG). Residues 484-504 (VPGGEVGGATTIGGTVPGGSA) are compositionally biased toward gly residues.

This sequence belongs to the MurCDEF family.

The protein resides in the cytoplasm. The catalysed reaction is UDP-N-acetyl-alpha-D-muramate + L-alanine + ATP = UDP-N-acetyl-alpha-D-muramoyl-L-alanine + ADP + phosphate + H(+). Its pathway is cell wall biogenesis; peptidoglycan biosynthesis. Its function is as follows. Cell wall formation. This Salinispora arenicola (strain CNS-205) protein is UDP-N-acetylmuramate--L-alanine ligase.